We begin with the raw amino-acid sequence, 61 residues long: Large ribosomal subunit protein uL30 (61 aa).

It belongs to the universal ribosomal protein uL30 family. As to quaternary structure, part of the 50S ribosomal subunit.

This chain is Large ribosomal subunit protein uL30, found in Petrotoga mobilis (strain DSM 10674 / SJ95).